Here is a 701-residue protein sequence, read N- to C-terminus: Elongation factor G (701 aa).

In terms of domain architecture, tr-type G spans 8–286 (ERIRNIGIIA…AVVYYLPSPV (279 aa)). GTP contacts are provided by residues 17 to 24 (AHIDAGKT), 85 to 89 (DTPGH), and 139 to 142 (NKMD).

It belongs to the TRAFAC class translation factor GTPase superfamily. Classic translation factor GTPase family. EF-G/EF-2 subfamily.

The protein localises to the cytoplasm. Functionally, catalyzes the GTP-dependent ribosomal translocation step during translation elongation. During this step, the ribosome changes from the pre-translocational (PRE) to the post-translocational (POST) state as the newly formed A-site-bound peptidyl-tRNA and P-site-bound deacylated tRNA move to the P and E sites, respectively. Catalyzes the coordinated movement of the two tRNA molecules, the mRNA and conformational changes in the ribosome. This Roseiflexus castenholzii (strain DSM 13941 / HLO8) protein is Elongation factor G.